The chain runs to 310 residues: Nucleotide-binding protein Ddes_0972 (310 aa).

Position 30-37 (30-37 (GLSGAGKS)) interacts with ATP. GTP is bound at residue 82–85 (DLRQ).

The protein belongs to the RapZ-like family.

Displays ATPase and GTPase activities. The chain is Nucleotide-binding protein Ddes_0972 from Desulfovibrio desulfuricans (strain ATCC 27774 / DSM 6949 / MB).